The primary structure comprises 190 residues: Large ribosomal subunit protein bL17 (190 aa).

Low complexity predominate over residues 135–165 (AKAAPAAEEAPAEEAPAAEEAATEEAPAAEE). Residues 135–190 (AKAAPAAEEAPAEEAPAAEEAATEEAPAAEETATEEAAAEEAPAAEEAPAEEKDAK) form a disordered region.

It belongs to the bacterial ribosomal protein bL17 family. Part of the 50S ribosomal subunit. Contacts protein L32.

This chain is Large ribosomal subunit protein bL17, found in Pseudarthrobacter chlorophenolicus (strain ATCC 700700 / DSM 12829 / CIP 107037 / JCM 12360 / KCTC 9906 / NCIMB 13794 / A6) (Arthrobacter chlorophenolicus).